The following is a 153-amino-acid chain: MIDYRDRHILSLLQANAEMPLAEIAERVALSVSACSRRVARLREEGYIKGTIALLDRKKINLPTTIFLLVKTGLHTGNYLEQFHAAVSAIPEIVEVHRLTGNFDYILKLALPNVEYYDVIYKQILKHVAFYDMSAYISMETVKISPALPTNYI.

Positions 2 to 63 constitute an HTH asnC-type domain; the sequence is IDYRDRHILS…LLDRKKINLP (62 aa). Positions 21-40 form a DNA-binding region, H-T-H motif; that stretch reads LAEIAERVALSVSACSRRVA.

In Zymomonas mobilis subsp. mobilis (strain ATCC 10988 / DSM 424 / LMG 404 / NCIMB 8938 / NRRL B-806 / ZM1), this protein is HTH-type transcriptional regulator Zrp (zrp).